A 264-amino-acid chain; its full sequence is Small ribosomal subunit protein eS4 (264 aa).

The region spanning 42–104 (LPLVIIMRNR…TNENFRLLYD (63 aa)) is the S4 RNA-binding domain.

This sequence belongs to the eukaryotic ribosomal protein eS4 family.

It localises to the cytoplasm. This Solanum tuberosum (Potato) protein is Small ribosomal subunit protein eS4 (RPS4).